A 561-amino-acid chain; its full sequence is Liver carboxylesterase 1F (561 aa).

The signal sequence occupies residues Met-1–Gly-18. The N-linked (GlcNAc...) asparagine glycan is linked to Asn-79. Residues Cys-87 and Cys-116 are joined by a disulfide bond. Residue Ser-221 is the Acyl-ester intermediate of the active site. Cys-273 and Cys-284 are oxidised to a cystine. Active-site charge relay system residues include Glu-353 and His-466. A Prevents secretion from ER motif is present at residues His-558–Leu-561.

The protein belongs to the type-B carboxylesterase/lipase family. Expressed in liver and kidney.

The protein localises to the lipid droplet. Its subcellular location is the cytoplasm. It localises to the cytosol. The protein resides in the endoplasmic reticulum. It is found in the microsome. The enzyme catalyses a carboxylic ester + H2O = an alcohol + a carboxylate + H(+). It catalyses the reaction all-trans-retinyl hexadecanoate + H2O = all-trans-retinol + hexadecanoate + H(+). Involved in the detoxification of xenobiotics and in the activation of ester and amide prodrugs. Hydrolyzes retinyl esters. Hydrolyzes p-nitrophenyl butyrate (PNPB), triacylglycerol and monoacylglycerol. Shows higher activity against PNPB, a short-chain fatty acid ester, than against triolein, a long-chain fatty acid ester. Shows no detectable activity against diacylglycerol, cholesterol ester or phospholipids. May play a role in adipocyte lipolysis. The sequence is that of Liver carboxylesterase 1F from Rattus norvegicus (Rat).